The chain runs to 83 residues: Apolipoprotein C-I (83 aa).

Positions 1–26 (MRLILSLPVLAVVLAMVLEGPAPAQA) are cleaved as a signal peptide.

Belongs to the apolipoprotein C1 family.

Its subcellular location is the secreted. In terms of biological role, inhibitor of lipoprotein binding to the low density lipoprotein (LDL) receptor, LDL receptor-related protein, and very low density lipoprotein (VLDL) receptor. Associates with high density lipoproteins (HDL) and the triacylglycerol-rich lipoproteins in the plasma and makes up about 10% of the protein of the VLDL and 2% of that of HDL. Appears to interfere directly with fatty acid uptake and is also the major plasma inhibitor of cholesteryl ester transfer protein (CETP). Binds free fatty acids and reduces their intracellular esterification. Modulates the interaction of APOE with beta-migrating VLDL and inhibits binding of beta-VLDL to the LDL receptor-related protein. In Rousettus aegyptiacus (Egyptian fruit bat), this protein is Apolipoprotein C-I (APOC1).